Consider the following 347-residue polypeptide: L-threonine 3-dehydrogenase (347 aa).

C42 provides a ligand contact to Zn(2+). Residues T44 and H47 each act as charge relay system in the active site. Residues H67, E68, C97, C100, C103, and C111 each contribute to the Zn(2+) site. Residues I180, D200, R205, L267–L269, and I292–T293 contribute to the NAD(+) site.

Belongs to the zinc-containing alcohol dehydrogenase family. Homotetramer. Zn(2+) serves as cofactor.

It is found in the cytoplasm. It catalyses the reaction L-threonine + NAD(+) = (2S)-2-amino-3-oxobutanoate + NADH + H(+). Its pathway is amino-acid degradation; L-threonine degradation via oxydo-reductase pathway; glycine from L-threonine: step 1/2. In terms of biological role, catalyzes the NAD(+)-dependent oxidation of L-threonine to 2-amino-3-ketobutyrate. In Bacillus velezensis (strain DSM 23117 / BGSC 10A6 / LMG 26770 / FZB42) (Bacillus amyloliquefaciens subsp. plantarum), this protein is L-threonine 3-dehydrogenase.